The following is a 403-amino-acid chain: tRNA methyltransferase 10 homolog C (403 aa).

The N-terminal 39 residues, 1–39, are a transit peptide targeting the mitochondrion; that stretch reads MAAFLKMSVSVNFFRPFTRFLVPFTLHRKRNNLTILQRY. A Phosphoserine modification is found at serine 84. Positions 138–169 form a coiled coil; that stretch reads TKEKVKKARQIKKEMKAAAREEAKNIKLLETT. Positions 191–383 constitute an SAM-dependent MTase TRM10-type domain; that stretch reads MGWKGAQAMQ…QFVPKRKHTG (193 aa).

This sequence belongs to the class IV-like SAM-binding methyltransferase superfamily. TRM10 family. Component of mitochondrial ribonuclease P, a complex composed of TRMT10C/MRPP1, HSD17B10/MRPP2 and PRORP/MRPP3. Interacts with HSD17B10/MRPP2; forming the MRPP1-MRPP2 subcomplex of the mitochondrial ribonuclease P complex. Interacts with GRSF1.

The protein localises to the mitochondrion matrix. The protein resides in the mitochondrion nucleoid. It catalyses the reaction adenosine(9) in tRNA + S-adenosyl-L-methionine = N(1)-methyladenosine(9) in tRNA + S-adenosyl-L-homocysteine + H(+). The catalysed reaction is guanosine(9) in tRNA + S-adenosyl-L-methionine = N(1)-methylguanosine(9) in tRNA + S-adenosyl-L-homocysteine + H(+). It carries out the reaction an adenosine in mRNA + S-adenosyl-L-methionine = an N(1)-methyladenosine in mRNA + S-adenosyl-L-homocysteine + H(+). Its function is as follows. Mitochondrial tRNA N(1)-methyltransferase involved in mitochondrial tRNA maturation. Component of mitochondrial ribonuclease P, a complex composed of TRMT10C/MRPP1, HSD17B10/MRPP2 and PRORP/MRPP3, which cleaves tRNA molecules in their 5'-ends. Together with HSD17B10/MRPP2, forms a subcomplex of the mitochondrial ribonuclease P, named MRPP1-MRPP2 subcomplex, which displays functions that are independent of the ribonuclease P activity. The MRPP1-MRPP2 subcomplex catalyzes the formation of N(1)-methylguanine and N(1)-methyladenine at position 9 (m1G9 and m1A9, respectively) in tRNAs; TRMT10C/MRPP1 acting as the catalytic N(1)-methyltransferase subunit. The MRPP1-MRPP2 subcomplex also acts as a tRNA maturation platform: following 5'-end cleavage by the mitochondrial ribonuclease P complex, the MRPP1-MRPP2 subcomplex enhances the efficiency of 3'-processing catalyzed by ELAC2, retains the tRNA product after ELAC2 processing and presents the nascent tRNA to the mitochondrial CCA tRNA nucleotidyltransferase TRNT1 enzyme. In addition to tRNA N(1)-methyltransferase activity, TRMT10C/MRPP1 also acts as a mRNA N(1)-methyltransferase by mediating methylation of adenosine residues at the N(1) position of MT-ND5 mRNA. Associates with mitochondrial DNA complexes at the nucleoids to initiate RNA processing and ribosome assembly. The sequence is that of tRNA methyltransferase 10 homolog C from Homo sapiens (Human).